Here is a 487-residue protein sequence, read N- to C-terminus: 6-phosphogluconate dehydrogenase, decarboxylating 1, chloroplastic (487 aa).

N-acetylmethionine is present on M1. Residues G13–G18, N36–T38, V80–A82, and N108 each bind NADP(+). Residues N108 and S134–G136 contribute to the substrate site. The active-site Proton acceptor is the K188. Residue H191–N192 coordinates substrate. Catalysis depends on E195, which acts as the Proton donor. Substrate is bound by residues Y196, K266, R293, R458, and H464.

This sequence belongs to the 6-phosphogluconate dehydrogenase family. Forms homodimer. Forms heterodimers with PGD2 or PGD3.

The protein localises to the plastid. It localises to the chloroplast. Its subcellular location is the cytoplasm. It is found in the cytosol. The catalysed reaction is 6-phospho-D-gluconate + NADP(+) = D-ribulose 5-phosphate + CO2 + NADPH. Its pathway is carbohydrate degradation; pentose phosphate pathway; D-ribulose 5-phosphate from D-glucose 6-phosphate (oxidative stage): step 3/3. Its function is as follows. Catalyzes the oxidative decarboxylation of 6-phosphogluconate to ribulose 5-phosphate and CO(2), with concomitant reduction of NADP to NADPH. In Arabidopsis thaliana (Mouse-ear cress), this protein is 6-phosphogluconate dehydrogenase, decarboxylating 1, chloroplastic.